We begin with the raw amino-acid sequence, 158 residues long: Large ribosomal subunit protein uL11 (158 aa).

The protein belongs to the universal ribosomal protein uL11 family. Part of the ribosomal stalk of the 50S ribosomal subunit. Interacts with L10 and the large rRNA to form the base of the stalk. L10 forms an elongated spine to which L12 dimers bind in a sequential fashion forming a multimeric L10(L12)X complex.

In terms of biological role, forms part of the ribosomal stalk which helps the ribosome interact with GTP-bound translation factors. The chain is Large ribosomal subunit protein uL11 from Methanocella arvoryzae (strain DSM 22066 / NBRC 105507 / MRE50).